The primary structure comprises 163 residues: MSLLLLVVSALHILILVLLFVATLDKSWWTLPDKESLNLWYDCTWNTTTQTWACSNVSENGWLKAVQALMVLSLILCCLSFILFMFQLYTMRRGGLFYATGLCQLCTSAAVFSGALIYAIHTEEILAKHPSGGSFGYCFALAWVAFPLALVSGTVYIHLRKRE.

Residues 4–24 form a helical membrane-spanning segment; that stretch reads LLLVVSALHILILVLLFVATL. Residues Asn46 and Asn56 are each glycosylated (N-linked (GlcNAc...) asparagine). 3 helical membrane passes run 66 to 86, 100 to 120, and 139 to 159; these read VQALMVLSLILCCLSFILFMF, TGLCQLCTSAAVFSGALIYAI, and FALAWVAFPLALVSGTVYIHL.

The protein belongs to the PMP-22/EMP/MP20 family.

It is found in the membrane. Functionally, probably involved in cell proliferation and cell-cell interactions. The sequence is that of Epithelial membrane protein 3 (Emp3) from Mus musculus (Mouse).